We begin with the raw amino-acid sequence, 156 residues long: Acyl carrier protein, mitochondrial (156 aa).

A mitochondrion-targeting transit peptide spans 1–68 (MASRVLSAYV…GRVTQLCRQY (68 aa)). One can recognise a Carrier domain in the interval 77–152 (EGIQDRVLYV…EIVDYIADKK (76 aa)). K88 carries the N6-acetyllysine modification. At S112 the chain carries O-(pantetheine 4'-phosphoryl)serine.

It belongs to the acyl carrier protein (ACP) family. In terms of assembly, mammalian complex I is composed of 45 different subunits. Interacts with ETFRF1. Identified in a complex composed of MALSU1, MIEF1 upstream open reading frame protein and NDUFAB1; within the trimeric complex, MIEF1 upstream open reading frame protein functions as a bridging scaffold that interacts with MALSU1 on one side, and with NDUFAB1 on the other side. The complex interacts with the mitochondrial large ribosomal subunit. Interacts with alpha-1-microglobulin chain; this interaction is required for the maintenance of mitochondrial redox homeostasis. Component of the mitochondrial core iron-sulfur cluster (ISC) complex composed of NFS1, LYRM4, NDUFAB1, ISCU, FXN, and FDX2; this complex is a heterohexamer containing two copies of each monomer. Component of the cyteine desulfurase complex composed of NFS1, LYRM4 and NDUFAB1; this complex contributes to the stability and cysteine desulfurase activity of NFS1. In terms of processing, phosphopantetheinylation at Ser-112 is essential for interactions with LYR motif-containing proteins.

The protein resides in the mitochondrion. In terms of biological role, carrier of the growing fatty acid chain in fatty acid biosynthesis. Accessory and non-catalytic subunit of the mitochondrial membrane respiratory chain NADH dehydrogenase (Complex I), which functions in the transfer of electrons from NADH to the respiratory chain. Accessory protein, of the core iron-sulfur cluster (ISC) assembly complex, that regulates, in association with LYRM4, the stability and the cysteine desulfurase activity of NFS1 and participates in the [2Fe-2S] clusters assembly on the scaffolding protein ISCU. The core iron-sulfur cluster (ISC) assembly complex is involved in the de novo synthesis of a [2Fe-2S] cluster, the first step of the mitochondrial iron-sulfur protein biogenesis. This process is initiated by the cysteine desulfurase complex (NFS1:LYRM4:NDUFAB1) that produces persulfide which is delivered on the scaffold protein ISCU in a FXN-dependent manner. Then this complex is stabilized by FDX2 which provides reducing equivalents to accomplish the [2Fe-2S] cluster assembly. Finally, the [2Fe-2S] cluster is transferred from ISCU to chaperone proteins, including HSCB, HSPA9 and GLRX5. The chain is Acyl carrier protein, mitochondrial from Pongo pygmaeus (Bornean orangutan).